We begin with the raw amino-acid sequence, 101 residues long: Small ribosomal subunit protein uS14 (101 aa).

The protein belongs to the universal ribosomal protein uS14 family. In terms of assembly, part of the 30S ribosomal subunit. Contacts proteins S3 and S10.

In terms of biological role, binds 16S rRNA, required for the assembly of 30S particles and may also be responsible for determining the conformation of the 16S rRNA at the A site. This is Small ribosomal subunit protein uS14 from Ruegeria pomeroyi (strain ATCC 700808 / DSM 15171 / DSS-3) (Silicibacter pomeroyi).